Reading from the N-terminus, the 285-residue chain is Putative cytochrome c peroxidase, mitochondrial (285 aa).

Residue H37 is the Proton acceptor of the active site. H161 serves as a coordination point for heme b. W177 serves as the catalytic Tryptophan radical intermediate.

Belongs to the peroxidase family. Cytochrome c peroxidase subfamily. As to quaternary structure, forms a one-to-one complex with cytochrome c. The cofactor is heme b.

The protein localises to the mitochondrion matrix. Its subcellular location is the mitochondrion intermembrane space. It catalyses the reaction 2 Fe(II)-[cytochrome c] + H2O2 + 2 H(+) = 2 Fe(III)-[cytochrome c] + 2 H2O. Its function is as follows. Destroys radicals which are normally produced within the cells and which are toxic to biological systems. The protein is Putative cytochrome c peroxidase, mitochondrial of Yarrowia lipolytica (strain CLIB 122 / E 150) (Yeast).